The primary structure comprises 430 residues: tRNA(Ile)-lysidine synthase (430 aa).

21 to 26 (SGGLDS) provides a ligand contact to ATP.

This sequence belongs to the tRNA(Ile)-lysidine synthase family.

It localises to the cytoplasm. The catalysed reaction is cytidine(34) in tRNA(Ile2) + L-lysine + ATP = lysidine(34) in tRNA(Ile2) + AMP + diphosphate + H(+). Functionally, ligates lysine onto the cytidine present at position 34 of the AUA codon-specific tRNA(Ile) that contains the anticodon CAU, in an ATP-dependent manner. Cytidine is converted to lysidine, thus changing the amino acid specificity of the tRNA from methionine to isoleucine. The protein is tRNA(Ile)-lysidine synthase of Salmonella agona (strain SL483).